Reading from the N-terminus, the 119-residue chain is Large ribosomal subunit protein uL22 (119 aa).

The protein belongs to the universal ribosomal protein uL22 family. Part of the 50S ribosomal subunit.

In terms of biological role, this protein binds specifically to 23S rRNA; its binding is stimulated by other ribosomal proteins, e.g. L4, L17, and L20. It is important during the early stages of 50S assembly. It makes multiple contacts with different domains of the 23S rRNA in the assembled 50S subunit and ribosome. The globular domain of the protein is located near the polypeptide exit tunnel on the outside of the subunit, while an extended beta-hairpin is found that lines the wall of the exit tunnel in the center of the 70S ribosome. The protein is Large ribosomal subunit protein uL22 of Bifidobacterium animalis subsp. lactis (strain AD011).